We begin with the raw amino-acid sequence, 100 residues long: Aspartyl/glutamyl-tRNA(Asn/Gln) amidotransferase subunit C (100 aa).

It belongs to the GatC family. In terms of assembly, heterotrimer of A, B and C subunits.

The catalysed reaction is L-glutamyl-tRNA(Gln) + L-glutamine + ATP + H2O = L-glutaminyl-tRNA(Gln) + L-glutamate + ADP + phosphate + H(+). It carries out the reaction L-aspartyl-tRNA(Asn) + L-glutamine + ATP + H2O = L-asparaginyl-tRNA(Asn) + L-glutamate + ADP + phosphate + 2 H(+). Its function is as follows. Allows the formation of correctly charged Asn-tRNA(Asn) or Gln-tRNA(Gln) through the transamidation of misacylated Asp-tRNA(Asn) or Glu-tRNA(Gln) in organisms which lack either or both of asparaginyl-tRNA or glutaminyl-tRNA synthetases. The reaction takes place in the presence of glutamine and ATP through an activated phospho-Asp-tRNA(Asn) or phospho-Glu-tRNA(Gln). This is Aspartyl/glutamyl-tRNA(Asn/Gln) amidotransferase subunit C from Streptococcus mutans serotype c (strain ATCC 700610 / UA159).